Reading from the N-terminus, the 1454-residue chain is Receptor-type tyrosine-protein phosphatase T (1454 aa).

The signal sequence occupies residues 1-29 (MGSLGGLALCLLRLLLLGLQRPPLPGAGA). The Extracellular segment spans residues 30–770 (QSAAGGCSFD…EKQVDNTVKM (741 aa)). The MAM domain maps to 34 to 195 (GGCSFDEHYS…VRVLAHPCRK (162 aa)). N-linked (GlcNAc...) asparagine glycans are attached at residues N82, N102, N141, and N212. Positions 197-288 (PHFLRLQNVE…SGVSNYAELI (92 aa)) constitute an Ig-like C2-type domain. C217 and C271 form a disulfide bridge. Fibronectin type-III domains lie at 295 to 388 (PIAP…TKCA), 393 to 487 (GPQN…TEED), and 488 to 594 (VPGA…SAPS). Residues N425, N514, N551, N605, N658, and N688 are each glycosylated (N-linked (GlcNAc...) asparagine). Positions 670–767 (AELKPSNLPV…VEPEKQVDNT (98 aa)) constitute a Fibronectin type-III 4 domain. A helical membrane pass occupies residues 771-791 (AGVIAGLLMFIIILLGVMLTI). Residues 792–1454 (KRRKLAKKQK…EVALEYLSSF (663 aa)) are Cytoplasmic-facing. The tract at residues 800-852 (QKETQSGAQREMGPVASTDKPTAKLGTNRNDEGFSSSSQDVNGFTDGSRGELS) is disordered. The segment covering 824–841 (LGTNRNDEGFSSSSQDVN) has biased composition (polar residues). 2 Tyrosine-protein phosphatase domains span residues 902-1156 (FKEE…ILEA) and 1188-1450 (IKDE…ALEY). Residues D1065, 1097–1103 (CSAGAGR), and Q1141 contribute to the substrate site. The Phosphocysteine intermediate role is filled by C1097. S1221 carries the post-translational modification Phosphoserine. Residue C1391 is the Phosphocysteine intermediate of the active site.

Belongs to the protein-tyrosine phosphatase family. Receptor class 2B subfamily. In terms of tissue distribution, expression is restricted to the CNS. Distributed throughout the brain and spinal cord.

The protein resides in the membrane. The catalysed reaction is O-phospho-L-tyrosyl-[protein] + H2O = L-tyrosyl-[protein] + phosphate. Its function is as follows. May be involved in both signal transduction and cellular adhesion in the CNS. May have specific signaling roles in the tyrosine phosphorylation/dephosphorylation pathway in the anterior compartment of the adult cerebellar cortex. The sequence is that of Receptor-type tyrosine-protein phosphatase T (Ptprt) from Mus musculus (Mouse).